A 98-amino-acid polypeptide reads, in one-letter code: MFEQRVNSDVLTVATVNSQDQVTQKPLRDSVKQALKNYFAQLNGQDVSDLYELVLAEVEQPLLDMVMQYTRGNQTRAALMMGINRGTLRKKLKKYGMN.

The H-T-H motif DNA-binding region spans 74–93 (QTRAALMMGINRGTLRKKLK).

Belongs to the transcriptional regulatory Fis family. As to quaternary structure, homodimer.

Its function is as follows. Activates ribosomal RNA transcription. Plays a direct role in upstream activation of rRNA promoters. The chain is DNA-binding protein Fis from Yersinia enterocolitica serotype O:8 / biotype 1B (strain NCTC 13174 / 8081).